The sequence spans 111 residues: Large ribosomal subunit protein P2 (111 aa).

The segment covering 63–84 (ASMPTGGAPAAAAGGAATAPAA) has biased composition (low complexity). A disordered region spans residues 63–111 (ASMPTGGAPAAAAGGAATAPAAEAKEAKKEEKKEESEEEDEDMGFGLFD). Positions 85–97 (EAKEAKKEEKKEE) are enriched in basic and acidic residues. Position 98 is a phosphoserine (Ser-98).

As to quaternary structure, part of the ribosomal stalk of the large ribosomal subunit; P1 and P2 exist as dimers which assemble on the P0 scaffold.

In terms of biological role, plays an important role in the elongation step of protein synthesis. In Artemia salina (Brine shrimp), this protein is Large ribosomal subunit protein P2.